We begin with the raw amino-acid sequence, 437 residues long: Ribosomal protein uS12 methylthiotransferase RimO (437 aa).

Residues N9 to K128 form the MTTase N-terminal domain. Residues C18, C57, C91, C152, C156, and C159 each coordinate [4Fe-4S] cluster. The Radical SAM core domain occupies T138–D368. One can recognise a TRAM domain in the interval Q371–A437.

Belongs to the methylthiotransferase family. RimO subfamily. The cofactor is [4Fe-4S] cluster.

The protein localises to the cytoplasm. It catalyses the reaction L-aspartate(89)-[ribosomal protein uS12]-hydrogen + (sulfur carrier)-SH + AH2 + 2 S-adenosyl-L-methionine = 3-methylsulfanyl-L-aspartate(89)-[ribosomal protein uS12]-hydrogen + (sulfur carrier)-H + 5'-deoxyadenosine + L-methionine + A + S-adenosyl-L-homocysteine + 2 H(+). Functionally, catalyzes the methylthiolation of an aspartic acid residue of ribosomal protein uS12. The chain is Ribosomal protein uS12 methylthiotransferase RimO from Flavobacterium johnsoniae (strain ATCC 17061 / DSM 2064 / JCM 8514 / BCRC 14874 / CCUG 350202 / NBRC 14942 / NCIMB 11054 / UW101) (Cytophaga johnsonae).